A 513-amino-acid polypeptide reads, in one-letter code: GMP synthase [glutamine-hydrolyzing] (513 aa).

A Glutamine amidotransferase type-1 domain is found at 3-200; that stretch reads SVLVLDFGSQ…LITIAGITPD (198 aa). Catalysis depends on Cys80, which acts as the Nucleophile. Residues His174 and Glu176 contribute to the active site. The 188-residue stretch at 201–388 folds into the GMPS ATP-PPase domain; sequence WSSKSFIEHQ…LGIAEDILMR (188 aa). 228-234 provides a ligand contact to ATP; sequence SGGVDST.

In terms of assembly, homodimer.

The catalysed reaction is XMP + L-glutamine + ATP + H2O = GMP + L-glutamate + AMP + diphosphate + 2 H(+). Its pathway is purine metabolism; GMP biosynthesis; GMP from XMP (L-Gln route): step 1/1. In terms of biological role, catalyzes the synthesis of GMP from XMP. In Pelodictyon phaeoclathratiforme (strain DSM 5477 / BU-1), this protein is GMP synthase [glutamine-hydrolyzing].